The sequence spans 200 residues: Crossover junction endodeoxyribonuclease RuvC (200 aa).

Active-site residues include aspartate 18, glutamate 78, and aspartate 151. 3 residues coordinate Mg(2+): aspartate 18, glutamate 78, and aspartate 151.

The protein belongs to the RuvC family. In terms of assembly, homodimer which binds Holliday junction (HJ) DNA. The HJ becomes 2-fold symmetrical on binding to RuvC with unstacked arms; it has a different conformation from HJ DNA in complex with RuvA. In the full resolvosome a probable DNA-RuvA(4)-RuvB(12)-RuvC(2) complex forms which resolves the HJ. Mg(2+) serves as cofactor.

It is found in the cytoplasm. The enzyme catalyses Endonucleolytic cleavage at a junction such as a reciprocal single-stranded crossover between two homologous DNA duplexes (Holliday junction).. Functionally, the RuvA-RuvB-RuvC complex processes Holliday junction (HJ) DNA during genetic recombination and DNA repair. Endonuclease that resolves HJ intermediates. Cleaves cruciform DNA by making single-stranded nicks across the HJ at symmetrical positions within the homologous arms, yielding a 5'-phosphate and a 3'-hydroxyl group; requires a central core of homology in the junction. The consensus cleavage sequence is 5'-(A/T)TT(C/G)-3'. Cleavage occurs on the 3'-side of the TT dinucleotide at the point of strand exchange. HJ branch migration catalyzed by RuvA-RuvB allows RuvC to scan DNA until it finds its consensus sequence, where it cleaves and resolves the cruciform DNA. This is Crossover junction endodeoxyribonuclease RuvC from Cytophaga hutchinsonii (strain ATCC 33406 / DSM 1761 / CIP 103989 / NBRC 15051 / NCIMB 9469 / D465).